Consider the following 407-residue polypeptide: [Pyruvate dehydrogenase (acetyl-transferring)] kinase isozyme 2, mitochondrial (407 aa).

One can recognise a Histidine kinase domain in the interval 135-364 (LEYKDTYGDD…DAVIYLKALS (230 aa)). A phosphotyrosine mark is found at Y215 and Y216. Residues 251–258 (ELFKNAMR), D290, 309–310 (ST), and 325–330 (GFGYGL) each bind ATP. K376 carries the post-translational modification N6-succinyllysine.

The protein belongs to the PDK/BCKDK protein kinase family. As to quaternary structure, homodimer, and heterodimer with PDK1. Interacts with the pyruvate dehydrogenase complex subunit DLAT, and is part of the multimeric pyruvate dehydrogenase complex that contains multiple copies of pyruvate dehydrogenase (E1), dihydrolipoamide acetyltransferase (DLAT, E2) and lipoamide dehydrogenase (DLD, E3). Expressed in many tissues, with the highest level in heart and skeletal muscle, intermediate levels in brain, kidney, pancreas and liver, and low levels in placenta and lung.

The protein localises to the mitochondrion matrix. It carries out the reaction L-seryl-[pyruvate dehydrogenase E1 alpha subunit] + ATP = O-phospho-L-seryl-[pyruvate dehydrogenase E1 alpha subunit] + ADP + H(+). With respect to regulation, activity is enhanced by binding to the pyruvate dehydrogenase subunit DLAT. Inhibited by ADP and pyruvate; these compounds interfere with DLAT binding and thereby inhibit kinase activity. Inhibited by dichloroacetate. Inhibited by AZD7545; this compound interferes with DLAT binding and thereby inhibits kinase activity. Functionally, kinase that plays a key role in the regulation of glucose and fatty acid metabolism and homeostasis via phosphorylation of the pyruvate dehydrogenase subunits PDHA1 and PDHA2. This inhibits pyruvate dehydrogenase activity, and thereby regulates metabolite flux through the tricarboxylic acid cycle, down-regulates aerobic respiration and inhibits the formation of acetyl-coenzyme A from pyruvate. Inhibition of pyruvate dehydrogenase decreases glucose utilization and increases fat metabolism. Mediates cellular responses to insulin. Plays an important role in maintaining normal blood glucose levels and in metabolic adaptation to nutrient availability. Via its regulation of pyruvate dehydrogenase activity, plays an important role in maintaining normal blood pH and in preventing the accumulation of ketone bodies under starvation. Plays a role in the regulation of cell proliferation and in resistance to apoptosis under oxidative stress. Plays a role in p53/TP53-mediated apoptosis. In Homo sapiens (Human), this protein is [Pyruvate dehydrogenase (acetyl-transferring)] kinase isozyme 2, mitochondrial (PDK2).